Here is a 475-residue protein sequence, read N- to C-terminus: tRNA modification GTPase MnmE (475 aa).

Residues R24, E81, and K124 each coordinate (6S)-5-formyl-5,6,7,8-tetrahydrofolate. The TrmE-type G domain occupies 220-397; it reads GLSVVLAGQP…LRRELLRLVG (178 aa). N230 serves as a coordination point for K(+). GTP-binding positions include 230 to 235, 249 to 255, 274 to 277, and 378 to 380; these read NVGKSS, TPIAGTT, DTAG, and SAR. S234 provides a ligand contact to Mg(2+). The K(+) site is built by T249, I251, and T254. Position 255 (T255) interacts with Mg(2+). K475 is a (6S)-5-formyl-5,6,7,8-tetrahydrofolate binding site.

The protein belongs to the TRAFAC class TrmE-Era-EngA-EngB-Septin-like GTPase superfamily. TrmE GTPase family. Homodimer. Heterotetramer of two MnmE and two MnmG subunits. It depends on K(+) as a cofactor.

Its subcellular location is the cytoplasm. Functionally, exhibits a very high intrinsic GTPase hydrolysis rate. Involved in the addition of a carboxymethylaminomethyl (cmnm) group at the wobble position (U34) of certain tRNAs, forming tRNA-cmnm(5)s(2)U34. The sequence is that of tRNA modification GTPase MnmE from Cupriavidus necator (strain ATCC 17699 / DSM 428 / KCTC 22496 / NCIMB 10442 / H16 / Stanier 337) (Ralstonia eutropha).